Here is a 415-residue protein sequence, read N- to C-terminus: Gamma-glutamyl phosphate reductase (415 aa).

The protein belongs to the gamma-glutamyl phosphate reductase family.

The protein localises to the cytoplasm. It carries out the reaction L-glutamate 5-semialdehyde + phosphate + NADP(+) = L-glutamyl 5-phosphate + NADPH + H(+). The protein operates within amino-acid biosynthesis; L-proline biosynthesis; L-glutamate 5-semialdehyde from L-glutamate: step 2/2. Functionally, catalyzes the NADPH-dependent reduction of L-glutamate 5-phosphate into L-glutamate 5-semialdehyde and phosphate. The product spontaneously undergoes cyclization to form 1-pyrroline-5-carboxylate. This Oceanobacillus iheyensis (strain DSM 14371 / CIP 107618 / JCM 11309 / KCTC 3954 / HTE831) protein is Gamma-glutamyl phosphate reductase.